Reading from the N-terminus, the 131-residue chain is uncharacterized protein (131 aa).

Residues 64 to 81 (VNCDKCGKPGNVKNDCPG) form a CCHC-type; degenerate zinc finger.

This is an uncharacterized protein from Homo sapiens (Human).